We begin with the raw amino-acid sequence, 691 residues long: Ribonuclease J (691 aa).

The interval 1-89 (MTDNNHYENN…TRNYAKEELD (89 aa)) is disordered. A loss of region decreases protein stability, still able to interact with RhpA, but has decreased RNase activity even on ssRNA region spans residues 1 to 132 (MTDNNHYENN…KIQVEHLNPH (132 aa)). Residues 10–19 (NESNENSSEN) are compositionally biased toward low complexity. The span at 41–57 (RENAQKNGESSHHEAPS) shows a compositional bias: basic and acidic residues. Residues 58 to 82 (HHKKEHRPNKKPNNHHKQKHAKTRN) are compositionally biased toward basic residues. 2 positions are modified to N6-acetyllysine: Lys-134 and Lys-140. Positions 208, 210, 212, 213, 277, and 299 each coordinate Zn(2+). An N6-acetyllysine mark is found at Lys-323, Lys-337, and Lys-397. 500 to 504 (HVSGH) contributes to the substrate binding site. Lys-511 is modified (N6-acetyllysine). Zn(2+) is bound at residue His-526. Residues Lys-547, Lys-634, and Lys-649 each carry the N6-acetyllysine modification.

This sequence belongs to the metallo-beta-lactamase superfamily. RNA-metabolizing metallo-beta-lactamase-like family. Bacterial RNase J subfamily. In terms of assembly, homodimer. Homotetramer; dimer of homodimers. Interacts with RNA helicase RphA, might be a member of a minimal RNA degradosome complex. Requires Zn(2+) as cofactor. In terms of processing, acetylated on nine lysine residues. Some of the residues are acetylated by multiple different mechanisms. RimL is partially responsible for the acetylation of Lys-323, Lys-397 and Lys-649. HPB8_1270 homolog is partially responsible for the acetylation of Lys-323, Lys-397, Lys-511 and Lys-649. Acetyl-phosphate-mediated non-enzymatic acetylation pathway takes part in the acetylation of Lys-134, Lys-323, Lys-397, Lys-511 and Lys-649. Acetylation of the remaining residues Lys-140, Lys-337, Lys-547 and Lys-634 occurs by a yet undetermined mechanism. Acetylation on a number of these residues is important for growth regulation and proper cell morphology.

Its subcellular location is the cytoplasm. With respect to regulation, catalytic activity is regulated by the balance between homodimers and homotetramers, with homotetramers being the active forms of this enzyme. Acetylation allosterically regulates the homooligomerization state and hence the catalytic activity. An RNase that has 5'-3' exoribonuclease and endoribonuclease activity. Degrades 5'-monophosphorylated ssRNA and dsRNA, considerably more active on ssRNA. Association with RhpA significantly increases the dsRNase activity. Degrades RNA substrate with hairpin structures at both ends with low activity, but presence of RhpA significantly increases the activity on this substrate. Stimulates ATPase activity of RNA helicase RhpA. Involved in stabilization of mRNA but apparently not rRNA. The protein is Ribonuclease J of Helicobacter pylori (strain B128).